Reading from the N-terminus, the 181-residue chain is MKRKLLSSLAISALSLGLLVSAPTASFAAESTSTKAHTESTMRTQSTASLFATITGASKTEWSFSDIELTYRPNTLLSLGVMEFTLPSGFTANTKDTLNGNALRTTQILNNGKTVRVPLALDLLGAGEFKLKLNNKTLPAAGTYTFRAENKSLSIGNKFYAEASIDVAKRSTPPTQPCGCN.

The signal sequence occupies residues 1-28; that stretch reads MKRKLLSSLAISALSLGLLVSAPTASFA.

Belongs to the BslA/BslB family. As to quaternary structure, forms polymers.

It localises to the secreted. Its subcellular location is the cell wall. In terms of biological role, involved in biofilm formation. Self-polymerizes and forms a layer on the surface of biofilms that confers hydrophobicity to the biofilm. The layer is stable and capable of resistance to high mechanical force compression. Required for complex colony architecture. May function synergistically with exopolysaccharides and TasA amyloid fibers to facilitate the assembly of the biofilm matrix. The polypeptide is Biofilm-surface layer protein A (Bacillus subtilis (strain 168)).